We begin with the raw amino-acid sequence, 403 residues long: Acetate kinase (403 aa).

Asparagine 13 contacts Mg(2+). Residue lysine 20 coordinates ATP. Arginine 94 provides a ligand contact to substrate. Residue aspartate 153 is the Proton donor/acceptor of the active site. Residues 213–217 (HLGNG), 288–290 (DFR), and 336–340 (GIGEN) contribute to the ATP site. Residue glutamate 390 coordinates Mg(2+).

It belongs to the acetokinase family. Homodimer. Requires Mg(2+) as cofactor. Mn(2+) is required as a cofactor.

Its subcellular location is the cytoplasm. The enzyme catalyses acetate + ATP = acetyl phosphate + ADP. Its pathway is metabolic intermediate biosynthesis; acetyl-CoA biosynthesis; acetyl-CoA from acetate: step 1/2. Catalyzes the formation of acetyl phosphate from acetate and ATP. Can also catalyze the reverse reaction. In Buchnera aphidicola subsp. Schizaphis graminum (strain Sg), this protein is Acetate kinase.